The primary structure comprises 153 residues: Pheromone-binding protein Gp-9 (153 aa).

The first 19 residues, 1–19 (MKTFVLHIFIFALVAFASA), serve as a signal peptide directing secretion. 3 disulfides stabilise this stretch: cysteine 37–cysteine 77, cysteine 73–cysteine 129, and cysteine 118–cysteine 138.

The protein belongs to the PBP/GOBP family. As to quaternary structure, homodimer.

The protein resides in the secreted. In terms of biological role, colony queen number, a major feature of social organization, is associated with worker genotype for Gp-9. Colonies are headed by either a single reproductive queen (monogyne form) or multiple queens (polygyne form). Differences in worker Gp-9 genotypes between social forms may cause differences in workers' abilities to recognize queens and regulate their numbers. The sequence is that of Pheromone-binding protein Gp-9 from Solenopsis invicta (Red imported fire ant).